The chain runs to 180 residues: Cytochrome c oxidase assembly protein CtaG (180 aa).

Over 1 to 8 (MSKKSNKS) the chain is Cytoplasmic. A helical; Signal-anchor for type II membrane protein transmembrane segment spans residues 9 to 29 (LAFSLLGLIVSMVLLSFAAVP). Residues 30-180 (LYNLFCKVTG…SFFKVRDVKK (151 aa)) lie on the Periplasmic side of the membrane.

It belongs to the COX11/CtaG family.

The protein localises to the cell inner membrane. Its function is as follows. Exerts its effect at some terminal stage of cytochrome c oxidase synthesis, probably by being involved in the insertion of the copper B into subunit I. The protein is Cytochrome c oxidase assembly protein CtaG of Rickettsia bellii (strain RML369-C).